The primary structure comprises 372 residues: Biotin synthase (372 aa).

A Radical SAM core domain is found at 73–308 (CCGNTVDLCS…QQIIRYAGGR (236 aa)). Positions 91, 95, and 98 each coordinate [4Fe-4S] cluster. [2Fe-2S] cluster-binding residues include Cys136, Cys173, Cys233, and Arg303.

Belongs to the radical SAM superfamily. Biotin synthase family. Homodimer. Requires [4Fe-4S] cluster as cofactor. [2Fe-2S] cluster is required as a cofactor.

The catalysed reaction is (4R,5S)-dethiobiotin + (sulfur carrier)-SH + 2 reduced [2Fe-2S]-[ferredoxin] + 2 S-adenosyl-L-methionine = (sulfur carrier)-H + biotin + 2 5'-deoxyadenosine + 2 L-methionine + 2 oxidized [2Fe-2S]-[ferredoxin]. The protein operates within cofactor biosynthesis; biotin biosynthesis; biotin from 7,8-diaminononanoate: step 2/2. In terms of biological role, catalyzes the conversion of dethiobiotin (DTB) to biotin by the insertion of a sulfur atom into dethiobiotin via a radical-based mechanism. In Cyanothece sp. (strain PCC 7425 / ATCC 29141), this protein is Biotin synthase.